We begin with the raw amino-acid sequence, 1319 residues long: Girdin homolog (1319 aa).

The 113-residue stretch at 6–118 (ENWSHPLAFW…KLLLLLLGCA (113 aa)) folds into the Calponin-homology (CH) domain. 3 coiled-coil regions span residues 141-173 (ELAA…TDEV), 218-690 (TSEL…ADLI), and 732-1096 (KRER…KKST). A disordered region spans residues 166 to 222 (KMKETDEVGGGGGSIEDVDSDDMESSTTSSSNGEIAIKQQDQSFLMSRSTSPTSELR). Residues 204–222 (QQDQSFLMSRSTSPTSELR) are compositionally biased toward polar residues. Disordered stretches follow at residues 1112 to 1236 (INRR…SPAH) and 1289 to 1308 (NVNL…LKPN). The segment covering 1118-1131 (TSNGGSTTEDSSVY) has biased composition (polar residues).

Belongs to the CCDC88 family. Expressed in AQR and PQR gas-sensing neurons in hermaphrodites (at protein level).

The protein localises to the cytoplasm. It localises to the cytoskeleton. The protein resides in the cilium basal body. It is found in the microtubule organizing center. Its subcellular location is the centrosome. The protein localises to the centriole. Functionally, scaffolding protein that plays a role in ciliogenesis, cilium positioning and dendrite anchoring in sensory amphid neurons including AWB, AWA, AWC, ADL and ASI, the phasmid neurons PHA and PHB and the gas sensing neurons AQR, PQR, URX and BAG. Its role in cilium positioning may be through regulation of the localization of cell adhesion proteins such as the apical junction protein ajm-1, and the ciliary scaffolding protein Rootletin/che-10. Plays a more prominent role in regulating dendrite morphogenesis in AQR than in PQR neurons. Regulates localization of hmr-1 to the distal AQR dendrite. During embryonic elongation, required for the anchoring of URX and BAG dendrites to the presumptive nose. This chain is Girdin homolog, found in Caenorhabditis elegans.